A 579-amino-acid polypeptide reads, in one-letter code: MKDSIRHLIQQALVRLTSEGVLPEGLTPAIQVENTKDKSHGDFASNIAMMLAKPAGMKPRELAEKLIAALPQDAQISKVEIAGPGFLNFFQNSDALAQRLETALADAQLAVHKASAKQRVVIDLSSPNLAKEMHVGHLRSTIIGDAVGRVLEFLGDEVIRQNHVGDWGTQFGMLLAYLEEKPAAAESELADLEQFYRAAKQRFDESPEFADRARELVVKLQAGDAQCLSLWTRFNDISLSHCQKIYDRLNVKLTPADVKGESAYNADLADIVEALREKGLLTEDNGAQCVFLDEFKNAEGNPLPVIVQKAGGGYLYATTDLAAMRYRSQQLHADRVLYFVDQRQALHFQMAFEVARRAGFVHEGMQLEHMGFGTMNGADGRPFKTRDGGTVKLIDLLDEAEQRAYTLVKGKNPELDEAELRQIARAVGISAVKYADLSKHRTSDYRFNFELMLSFEGNTAPYLLYAYTRVASVFRKLGKGIDEISGQIQLDAEQELALAAKLAQFGEVLNSVGEKGEPHLLCAYLYDLAGLFSSFYEHCPILGAEQEAQKQSRLRLAALTGRTLKQGLELLGLEPLERM.

A 'HIGH' region motif is present at residues 127–137 (PNLAKEMHVGH).

This sequence belongs to the class-I aminoacyl-tRNA synthetase family. In terms of assembly, monomer.

The protein localises to the cytoplasm. It catalyses the reaction tRNA(Arg) + L-arginine + ATP = L-arginyl-tRNA(Arg) + AMP + diphosphate. This is Arginine--tRNA ligase from Stutzerimonas stutzeri (strain A1501) (Pseudomonas stutzeri).